The primary structure comprises 450 residues: Asparagine--tRNA ligase (450 aa).

This sequence belongs to the class-II aminoacyl-tRNA synthetase family. In terms of assembly, homodimer.

The protein localises to the cytoplasm. The catalysed reaction is tRNA(Asn) + L-asparagine + ATP = L-asparaginyl-tRNA(Asn) + AMP + diphosphate + H(+). The sequence is that of Asparagine--tRNA ligase from Enterococcus faecalis (strain ATCC 700802 / V583).